We begin with the raw amino-acid sequence, 606 residues long: Limonene synthase, chloroplastic (606 aa).

The N-terminal 38 residues, M1–A38, are a transit peptide targeting the chloroplast. 5 residues coordinate (2E)-geranyl diphosphate: R320, D357, D361, R497, and D500. The Mg(2+) site is built by D357 and D361. Residues D357–D361 carry the DDXXD motif motif. The Mg(2+) site is built by D500, T504, and E508.

This sequence belongs to the terpene synthase family. Tpsb subfamily. As to quaternary structure, monomer. Requires Mg(2+) as cofactor. The cofactor is Mn(2+). As to expression, confined to fruits.

Its subcellular location is the plastid. It localises to the chloroplast. It catalyses the reaction (2E,6E)-farnesyl diphosphate = (E)-beta-farnesene + diphosphate. The catalysed reaction is (2E)-geranyl diphosphate = limonene + diphosphate. The enzyme catalyses (2E)-geranyl diphosphate = beta-pinene + diphosphate. It carries out the reaction (2E)-geranyl diphosphate = sabinene + diphosphate. It catalyses the reaction (2E)-geranyl diphosphate = beta-myrcene + diphosphate. The catalysed reaction is (2E)-geranyl diphosphate = alpha-pinene + diphosphate. The enzyme catalyses (2E)-geranyl diphosphate = terpinolene + diphosphate. Its pathway is secondary metabolite biosynthesis; terpenoid biosynthesis. Functionally, monoterpene synthase (mono-TPS) involved in the biosynthesis of monoterpenes natural products, constituent of coffee beverage aroma. Catalyzes the conversion of (2E)-geranyl diphosphate (GPP) into limonene, beta-pinene, sabinene and beta-myrcene, and, as minor products, alpha-pinene and alpha-terpinolene. Can also, with a low efficiency, use farnesyl pyrophosphate (FPP) as substrate to produce beta-farnesene. Not able to use geranylgeranyl pyrophosphate (GGPP) as substrate. The chain is Limonene synthase, chloroplastic from Coffea arabica (Arabian coffee).